The chain runs to 327 residues: Spermidine/putrescine import ATP-binding protein PotA (327 aa).

Positions 5 to 235 constitute an ABC transporter domain; the sequence is IKVEAVEKHF…PKTLFVATFI (231 aa). Residue 37–44 coordinates ATP; the sequence is GPSGCGKT.

It belongs to the ABC transporter superfamily. Spermidine/putrescine importer (TC 3.A.1.11.1) family. The complex is composed of two ATP-binding proteins (PotA), two transmembrane proteins (PotB and PotC) and a solute-binding protein (PotD).

It localises to the cell membrane. The catalysed reaction is ATP + H2O + polyamine-[polyamine-binding protein]Side 1 = ADP + phosphate + polyamineSide 2 + [polyamine-binding protein]Side 1.. Part of the ABC transporter complex PotABCD involved in spermidine/putrescine import. Responsible for energy coupling to the transport system. The polypeptide is Spermidine/putrescine import ATP-binding protein PotA (Bacillus thuringiensis subsp. konkukian (strain 97-27)).